The following is a 275-amino-acid chain: Transcription factor JUNGBRUNNEN 1 (275 aa).

Residues 1–24 (MSGEGNLGKDHEEENEAPLPGFRF) form a disordered region. The 150-residue stretch at 18–167 (PLPGFRFHPT…VWTLCRIFKR (150 aa)) folds into the NAC domain. Residues 115–173 (VGLKKSLVYYLGSAGKGTKTDWMMHEFRLPSTTKTDSPAQQAEVWTLCRIFKRVTSQRN) mediate DNA binding. Residues 191-219 (CSKTSSLDSDHTSHRTVDSMSHEPPLPQP) are disordered. Residues 198–211 (DSDHTSHRTVDSMS) are compositionally biased toward basic and acidic residues.

As to expression, expressed in roots, root caps, cotyledons, tips and margin of young leaves, senescent regions of fully expanded leaves and floral tissues, including old sepals, petals, staments, mature anthers and pollen grains. Not detected in the abscission zone of open flowers, emerging lateral roots and root meristematic zones.

It localises to the nucleus. Functionally, transcription factor that binds to the 5'- RRYGCCGT-3' consensus core sequence. Central longevity regulator. Negative regulator of leaf senescence. Modulates cellular H(2)O(2) levels and enhances tolerance to various abiotic stresses through the regulation of DREB2A. The sequence is that of Transcription factor JUNGBRUNNEN 1 (JUB1) from Arabidopsis thaliana (Mouse-ear cress).